Here is a 213-residue protein sequence, read N- to C-terminus: Superoxide dismutase [Mn] (213 aa).

Residues H27, H82, D168, and H172 each contribute to the Mn(2+) site.

It belongs to the iron/manganese superoxide dismutase family. In terms of assembly, homodimer.

It catalyses the reaction 2 superoxide + 2 H(+) = H2O2 + O2. Its activity is regulated as follows. Inhibited by hydrogen peroxide. Functionally, destroys superoxide anion radicals which are normally produced within the cells and which are toxic to biological systems. The polypeptide is Superoxide dismutase [Mn] (sodA) (Haemophilus ducreyi (strain 35000HP / ATCC 700724)).